The chain runs to 372 residues: Envelope phospholipase OPG057 (372 aa).

Positions 153–156 (YPPL) match the YPPL motif. Residues C185 and C186 are each lipidated (S-palmitoyl cysteine; by host). Residues 307 to 334 (FTIQNNTKLLIVDDEYVHITSANFDGTH) form the PLD phosphodiesterase domain.

The protein belongs to the orthopoxvirus OPG057 family. In terms of assembly, interacts with protein OPG190. Post-translationally, palmitoylated. Attachment of the palmitate moiety is essential for correct intracellular targeting and protein function.

It localises to the virion membrane. Its subcellular location is the host Golgi apparatus. The protein resides in the host trans-Golgi network. It is found in the host endoplasmic reticulum membrane. It carries out the reaction a 1,2-diacyl-sn-glycero-3-phosphocholine + H2O = a 1,2-diacyl-sn-glycero-3-phosphate + choline + H(+). Functionally, major envelope protein that plays a role in the biogenesis of the viral double membrane and in egress of virus from the host cell. Produces the wrapped form of virus that is required for cell-to-cell spread. Acts as a lipase with broad specificity including phospholipase C, phospholipase A, and triacylglycerol lipase activities. The chain is Envelope phospholipase OPG057 (OPG057) from Vaccinia virus (strain Copenhagen) (VACV).